The chain runs to 398 residues: E3 ubiquitin-protein ligase ATL6 (398 aa).

The N-terminal stretch at 1-29 (MRSSDHMAFAGVLPIVFLLILSSADLAAS) is a signal peptide. A helical transmembrane segment spans residues 50 to 70 (AVIVVILIAALFFMGFFSIYF). The segment at 128 to 170 (CAICLNEFEDDETLRLLPKCDHVFHPHCIDAWLEAHVTCPVCR) adopts an RING-type; atypical zinc-finger fold. Residue serine 278 is modified to Phosphoserine. Positions 368-398 (PRGGVNKDGEGTSVKSTGASGSTSGSVRLPV) are disordered. A compositionally biased stretch (low complexity) spans 378–398 (GTSVKSTGASGSTSGSVRLPV).

It belongs to the RING-type zinc finger family. ATL subfamily.

Its subcellular location is the membrane. It carries out the reaction S-ubiquitinyl-[E2 ubiquitin-conjugating enzyme]-L-cysteine + [acceptor protein]-L-lysine = [E2 ubiquitin-conjugating enzyme]-L-cysteine + N(6)-ubiquitinyl-[acceptor protein]-L-lysine.. Its pathway is protein modification; protein ubiquitination. Its function is as follows. E3 ubiquitin-protein ligase able to catalyze polyubiquitination with ubiquitin-conjugating enzyme E2 UBC8 in vitro. May be involved in the plant C/N response and the early steps of the plant defense signaling pathway. In Arabidopsis thaliana (Mouse-ear cress), this protein is E3 ubiquitin-protein ligase ATL6 (ATL6).